A 540-amino-acid chain; its full sequence is Glucose-6-phosphate isomerase (540 aa).

The Proton donor role is filled by Glu-350. Catalysis depends on residues His-381 and Lys-503.

Belongs to the GPI family.

It localises to the cytoplasm. The catalysed reaction is alpha-D-glucose 6-phosphate = beta-D-fructose 6-phosphate. Its pathway is carbohydrate biosynthesis; gluconeogenesis. It functions in the pathway carbohydrate degradation; glycolysis; D-glyceraldehyde 3-phosphate and glycerone phosphate from D-glucose: step 2/4. Catalyzes the reversible isomerization of glucose-6-phosphate to fructose-6-phosphate. This Paraburkholderia phytofirmans (strain DSM 17436 / LMG 22146 / PsJN) (Burkholderia phytofirmans) protein is Glucose-6-phosphate isomerase.